Consider the following 3674-residue polypeptide: Dystrophin-1 (3674 aa).

The interval 1-25 (MLFSGASTAKPKKDEKKDKKSDRDP) is disordered. The segment covering 11–25 (PKKDEKKDKKSDRDP) has biased composition (basic and acidic residues). Residues 30–39 (QEWVFVRWAN) form an actin-binding region. The Calponin-homology (CH) domain occupies 129–234 (EKLSEAIKQW…YLMSLYLAMI (106 aa)). The interval 265-325 (SQPSTSSSSA…KSGKSKKARR (61 aa)) is disordered. 3 Spectrin repeats span residues 327 to 435 (EQLA…VLQQ), 436 to 541 (QIHL…KLDG), and 612 to 656 (CELV…TLVK). The span at 655–674 (VKSGKADVKQVQESQNEQKE) shows a compositional bias: basic and acidic residues. 5 disordered regions span residues 655–689 (VKSGKADVKQVQESQNEQKEQPASSEGLSTDTEGE), 968–991 (NSQMSNETVEKAETRKAEMEEKRR), 1587–1606 (ASAEKAPAPELRDARLSSPS), 1796–1833 (LSATEKKPVETVKSTIPDRPEVPEEPEKSSPDRTSRSS), and 2387–2466 (MNDS…GSTG). Positions 675-685 (QPASSEGLSTD) are enriched in polar residues. A compositionally biased stretch (basic and acidic residues) spans 975 to 991 (TVEKAETRKAEMEEKRR). The span at 1796-1830 (LSATEKKPVETVKSTIPDRPEVPEEPEKSSPDRTS) shows a compositional bias: basic and acidic residues. Positions 2391-2411 (GGDTTESRSTVVEMTSVHTKQ) are enriched in polar residues. 4 Spectrin repeats span residues 2576-2673 (RNEM…VLEA), 2725-2789 (FKTL…RLEK), 2792-2905 (QEWE…RLKK), and 2926-3032 (QRLQ…AVRN). In terms of domain architecture, WW spans 3047-3081 (QSVTLPWQRAISKSNLLPYYIEQTSEKTQWEHPVW). A ZZ-type zinc finger spans residues 3301–3357 (KHASKCNVCKMFPIIGIRYRCLTCFNCDLCQNCFFSQRTAKSHRTNHPMQEYCEKTT). Residues Cys3306, Cys3309, Cys3321, Cys3324, Cys3330, Cys3333, His3343, and His3347 each coordinate Zn(2+). Disordered stretches follow at residues 3481 to 3522 (STME…TQSQ) and 3568 to 3645 (KQQA…QMQN). Positions 3568-3579 (KQQAPLSTNSLL) are enriched in polar residues.

In terms of assembly, component of the dystrophin glycoprotein complex (DGC). Interacts with dyb-1 and stn-1 to form the DGC. Interacts with stn-2. As to expression, expressed in body wall, head, pharyngeal and vulval muscles, from late embryogenesis to adulthood (at protein level).

Its subcellular location is the cell membrane. It localises to the sarcolemma. The protein resides in the cytoplasm. The protein localises to the cytoskeleton. Functionally, plays a role in cholinergic transmission and as a functional partner of dystrobrevin (dyb-1), necessary for muscle maintenance. Required for neuronal positioning. May play a role in the localization of slo-1 near dense bodies in the muscle. This Caenorhabditis elegans protein is Dystrophin-1 (dys-1).